The primary structure comprises 179 residues: Apoptosis regulator DPV022 (179 aa).

A helical transmembrane segment spans residues valine 148–isoleucine 170.

As to quaternary structure, interacts with host BAX and BAK1.

Its subcellular location is the host mitochondrion. It is found in the host membrane. Plays a role in the inhibition of host apoptosis by sequestering and inactivating several proapoptotic BCL-2 proteins, including BAK1 and BAX. Prevents the conformational activation of both of them. This is Apoptosis regulator DPV022 (DPV022) from Deerpox virus (strain Mule deer/United States/W-848-83/1983) (DPV).